A 138-amino-acid polypeptide reads, in one-letter code: Basic phospholipase A2 PLA-N (138 aa).

A signal peptide spans methionine 1 to glycine 16. 7 cysteine pairs are disulfide-bonded: cysteine 42-cysteine 131, cysteine 44-cysteine 60, cysteine 59-cysteine 111, cysteine 65-cysteine 138, cysteine 66-cysteine 104, cysteine 73-cysteine 97, and cysteine 91-cysteine 102. The Ca(2+) site is built by tyrosine 43, glycine 45, and glycine 47. Histidine 63 is a catalytic residue. Aspartate 64 serves as a coordination point for Ca(2+). Residue aspartate 105 is part of the active site.

The protein belongs to the phospholipase A2 family. Group II subfamily. D49 sub-subfamily. It depends on Ca(2+) as a cofactor. In terms of tissue distribution, expressed by the venom gland.

Its subcellular location is the secreted. It catalyses the reaction a 1,2-diacyl-sn-glycero-3-phosphocholine + H2O = a 1-acyl-sn-glycero-3-phosphocholine + a fatty acid + H(+). Its function is as follows. Snake venom phospholipase A2 (PLA2) that displays edema-inducing activities, as well as presynaptic neurotoxicity and myotoxicity. PLA2 catalyzes the calcium-dependent hydrolysis of the 2-acyl groups in 3-sn-phosphoglycerides. This chain is Basic phospholipase A2 PLA-N, found in Protobothrops flavoviridis (Habu).